The primary structure comprises 204 residues: Inositol diphosphatase DSP2 (204 aa).

A disordered region spans residues 1–27 (MQLEISPRQRSQQQKEEEGEHQQRAGE). Basic and acidic residues predominate over residues 13–27 (QQKEEEGEHQQRAGE). The Tyrosine-protein phosphatase domain maps to 51-203 (NFAEVNDGIF…SSLMHLTASQ (153 aa)). A WPD loop important for active site topology region spans residues 107-119 (FGIDGSKELLVNI). 1D-myo-inositol hexakisphosphate-binding residues include Asn-118, Ile-119, and Lys-123. The active-site Phosphocysteine intermediate is the Cys-143.

Belongs to the protein-tyrosine phosphatase family. Atypical dual-specificity phosphatase Siw14-like subfamily. Expressed in roots and young panicles.

Its subcellular location is the cytoplasm. It localises to the nucleus. It carries out the reaction 5-diphospho-1D-myo-inositol 1,2,3,4,6-pentakisphosphate + H2O = 1D-myo-inositol hexakisphosphate + phosphate + H(+). It catalyses the reaction 1,5-bis(diphospho)-1D-myo-inositol 2,3,4,6-tetrakisphosphate + H2O = 1-diphospho-1D-myo-inositol 2,3,4,5,6-pentakisphosphate + phosphate + 2 H(+). The enzyme catalyses 3,5-bis(diphospho)-1D-myo-inositol 1,2,4,6-tetrakisphosphate + H2O = 3-diphospho-1D-myo-inositol 1,2,4,5,6-pentakisphosphate + phosphate + 2 H(+). The catalysed reaction is 6-diphospho-1D-myo-inositol pentakisphosphate + H2O = 1D-myo-inositol hexakisphosphate + phosphate + H(+). Cleaves the beta-phosphate at the 5-position of soluble inositol pyrophosphates. Has highest activity on 5-diphosphoinositol 1,2,3,4,6-pentakisphosphate (5-InsP(7)). Acts as a negative regulator of defense responses against the fungal pathogen Magnaporthe oryzae. The sequence is that of Inositol diphosphatase DSP2 from Oryza sativa subsp. japonica (Rice).